A 305-amino-acid polypeptide reads, in one-letter code: Glyceraldehyde-3-phosphate dehydrogenase 2, cytosolic (305 aa).

D3 and R50 together coordinate NAD(+). Residues 121–123 (SCT), T152, 181–182 (TG), and R204 contribute to the D-glyceraldehyde 3-phosphate site. The active-site Nucleophile is C122. An NAD(+)-binding site is contributed by N286.

It belongs to the glyceraldehyde-3-phosphate dehydrogenase family. In terms of assembly, homotetramer.

The protein resides in the cytoplasm. The enzyme catalyses D-glyceraldehyde 3-phosphate + phosphate + NAD(+) = (2R)-3-phospho-glyceroyl phosphate + NADH + H(+). Its pathway is carbohydrate degradation; glycolysis; pyruvate from D-glyceraldehyde 3-phosphate: step 1/5. Key enzyme in glycolysis that catalyzes the first step of the pathway by converting D-glyceraldehyde 3-phosphate (G3P) into 3-phospho-D-glyceroyl phosphate. Essential for the maintenance of cellular ATP levels and carbohydrate metabolism. The protein is Glyceraldehyde-3-phosphate dehydrogenase 2, cytosolic (GAPC) of Hordeum vulgare (Barley).